We begin with the raw amino-acid sequence, 1902 residues long: PI-type proteinase (1902 aa).

A signal peptide spans 1–33 (MQRKKKGLSILLAGTVALGALAVLPVGEIQAKA). Positions 34–187 (AISQQTKGSS…VTLAKVYYPT (154 aa)) are excised as a propeptide. The Peptidase S8 domain occupies 191 to 697 (ANSMANVQAV…AGLVDVKAAI (507 aa)). Catalysis depends on charge relay system residues D217, H281, and S620. Residues 1796 to 1874 (GKGDGTTGTS…GALPKTGETT (79 aa)) form a disordered region. A compositionally biased stretch (gly residues) spans 1797 to 1812 (KGDGTTGTSDKGGGQG). Positions 1830–1843 (SQPSSGGNIPTNPA) are enriched in polar residues. The short motif at 1867–1871 (LPKTG) is the LPXTG sorting signal element. T1870 is modified (pentaglycyl murein peptidoglycan amidated threonine). A propeptide spans 1871 to 1902 (GETTERPAFGFLGVIVVILMGVLGLKRKQREE) (removed by sortase).

It belongs to the peptidase S8 family.

Its subcellular location is the secreted. The protein localises to the cell wall. The enzyme catalyses Endopeptidase activity with very broad specificity, although some subsite preference have been noted, e.g. large hydrophobic residues in the P1 and P4 positions, and Pro in the P2 position. Best known for its action on caseins, although it has been shown to hydrolyze hemoglobin and oxidized insulin B-chain.. Its function is as follows. Protease which breaks down milk proteins during the growth of the bacteria on milk. This Lactococcus lactis subsp. cremoris (Streptococcus cremoris) protein is PI-type proteinase (prtP).